Reading from the N-terminus, the 196-residue chain is Protein GrpE (196 aa).

The tract at residues 1–39 (MSSKEQKTPEGQAPEEIIMDQHEEIEAVEPEASAEQVDP) is disordered.

Belongs to the GrpE family. Homodimer.

The protein localises to the cytoplasm. In terms of biological role, participates actively in the response to hyperosmotic and heat shock by preventing the aggregation of stress-denatured proteins, in association with DnaK and GrpE. It is the nucleotide exchange factor for DnaK and may function as a thermosensor. Unfolded proteins bind initially to DnaJ; upon interaction with the DnaJ-bound protein, DnaK hydrolyzes its bound ATP, resulting in the formation of a stable complex. GrpE releases ADP from DnaK; ATP binding to DnaK triggers the release of the substrate protein, thus completing the reaction cycle. Several rounds of ATP-dependent interactions between DnaJ, DnaK and GrpE are required for fully efficient folding. This is Protein GrpE from Escherichia coli O139:H28 (strain E24377A / ETEC).